Reading from the N-terminus, the 302-residue chain is Ribosomal RNA small subunit methyltransferase H (302 aa).

S-adenosyl-L-methionine contacts are provided by residues 36-38 (GGH), Asp-56, Phe-84, Asp-99, and Gln-106.

It belongs to the methyltransferase superfamily. RsmH family.

It localises to the cytoplasm. The catalysed reaction is cytidine(1402) in 16S rRNA + S-adenosyl-L-methionine = N(4)-methylcytidine(1402) in 16S rRNA + S-adenosyl-L-homocysteine + H(+). Its function is as follows. Specifically methylates the N4 position of cytidine in position 1402 (C1402) of 16S rRNA. This is Ribosomal RNA small subunit methyltransferase H from Flavobacterium johnsoniae (strain ATCC 17061 / DSM 2064 / JCM 8514 / BCRC 14874 / CCUG 350202 / NBRC 14942 / NCIMB 11054 / UW101) (Cytophaga johnsonae).